The primary structure comprises 116 residues: Beta-2-microglobulin (116 aa).

The first 19 residues, M1–G19, serve as a signal peptide directing secretion. The Ig-like C1-type domain occupies P24–Y110. C44 and C99 are oxidised to a cystine.

Belongs to the beta-2-microglobulin family. In terms of assembly, heterodimer of an alpha chain and a beta chain. Beta-2-microglobulin is the beta-chain of major histocompatibility complex class I molecules.

It localises to the secreted. Component of the class I major histocompatibility complex (MHC). Involved in the presentation of peptide antigens to the immune system. The polypeptide is Beta-2-microglobulin (b2m) (Cyprinus carpio (Common carp)).